The sequence spans 197 residues: Imidazoleglycerol-phosphate dehydratase (197 aa).

It belongs to the imidazoleglycerol-phosphate dehydratase family.

The protein localises to the cytoplasm. It catalyses the reaction D-erythro-1-(imidazol-4-yl)glycerol 3-phosphate = 3-(imidazol-4-yl)-2-oxopropyl phosphate + H2O. Its pathway is amino-acid biosynthesis; L-histidine biosynthesis; L-histidine from 5-phospho-alpha-D-ribose 1-diphosphate: step 6/9. The protein is Imidazoleglycerol-phosphate dehydratase of Rhodopseudomonas palustris (strain HaA2).